Consider the following 912-residue polypeptide: MNPINSFIFPDIPKDLGKILMKDDQQLIVVGIIGKSSTPDCNKLVGFNLLTIHPALTDTDPRDGRVKFYFENDGKILYLHFETTFDQHVMADLLAKAVQTGIQDNFINFNSTVRTRFARVLLFAIQVCHMIVLVEPSSVFDTSYLSIFKSLKIIREKYVLKFLPKLLKSSNLGNYMGKEARLCSPRFIFFFEGTSNIKPEDVEKLDGLECSVEEEIYKMLRNEFIITNNSAMSLFSIPRSKKFVFYNSDKRAKSNPLADSIDLLMKYLNKPAGGQNDDDEDLMSRLRPYDGYGMSAWSVGKSKRAEKKERSILALLKEHVAEAFEHGFDDSASKYRGRGHFVIPSFKTWYEGFKLLHKIFIDNPSNSSYETNDPDYKAFLQNFHKIIDIDERFFAEICEHGLELAMVNYKDMLPHHYSSTFHEKKYEQAHELFTRYARGPEVERHEQKLKDYCDSIWLNGKQQCEYPSLRGNPCALGKHKVKDPTEHSSGVIFVSACNCGRTQGHREDPYTIRQGNYDFYQIIAKSCSSCNVLERVKFPVFEPSSNDFRAAEFINKNLSNLMSFEHSNRTPDASTHPPMTNENSPHLSGSQKSQDSASNLTFSMDEKRDEENKSQKFGTQGEDEDETLEQETVNEIVIKVGEHSEDKAILRQPSTTEYLPGMLHAASPAGLLPQFPSWSLVCLGPSSIYTHNSGIPEHVQSGFLSGANFLLPWDVSVRLEHAQSWAASYEKIRNRKKNTSQPKSSESSNTFTLKIFLGVEYECLRGHRFIMSGPDTVLRGGSGSIVRDSGSKVVFNDMPIYFPCPCRSSNIAQLMRVHVVTPKAPVNVIVEPKVRILQGTTQNCLTFTTGLTEPIKLSQSAYWILRLPFIYEGDSGPLMPPAGVTVANAATHGVLMAGMFGIRESEISEELL.

A disordered region spans residues 565 to 630; it reads EHSNRTPDAS…GEDEDETLEQ (66 aa). Residues 570–602 are compositionally biased toward polar residues; sequence TPDASTHPPMTNENSPHLSGSQKSQDSASNLTF. The span at 604–614 shows a compositional bias: basic and acidic residues; the sequence is MDEKRDEENKS.

The protein belongs to the SMG8 family.

In terms of biological role, involved in nonsense-mediated decay (NMD) of mRNAs containing premature stop codons. Probable component of kinase complex containing SMG1 and recruited to stalled ribosomes. The polypeptide is Nonsense-mediated mRNA decay factor SMG8 (Culex quinquefasciatus (Southern house mosquito)).